Consider the following 227-residue polypeptide: Translation initiation factor 6 (227 aa).

This sequence belongs to the eIF-6 family.

Its function is as follows. Binds to the 50S ribosomal subunit and prevents its association with the 30S ribosomal subunit to form the 70S initiation complex. The sequence is that of Translation initiation factor 6 from Methanococcus maripaludis (strain C6 / ATCC BAA-1332).